The following is a 250-amino-acid chain: 5-oxoprolinase subunit A (250 aa).

It belongs to the LamB/PxpA family. Forms a complex composed of PxpA, PxpB and PxpC.

It carries out the reaction 5-oxo-L-proline + ATP + 2 H2O = L-glutamate + ADP + phosphate + H(+). In terms of biological role, catalyzes the cleavage of 5-oxoproline to form L-glutamate coupled to the hydrolysis of ATP to ADP and inorganic phosphate. The polypeptide is 5-oxoprolinase subunit A (Staphylococcus aureus (strain NCTC 8325 / PS 47)).